Reading from the N-terminus, the 572-residue chain is 2-succinyl-5-enolpyruvyl-6-hydroxy-3-cyclohexene-1-carboxylate synthase (572 aa).

It belongs to the TPP enzyme family. MenD subfamily. Homodimer. Mg(2+) is required as a cofactor. Mn(2+) serves as cofactor. The cofactor is thiamine diphosphate.

It catalyses the reaction isochorismate + 2-oxoglutarate + H(+) = 5-enolpyruvoyl-6-hydroxy-2-succinyl-cyclohex-3-ene-1-carboxylate + CO2. The protein operates within quinol/quinone metabolism; 1,4-dihydroxy-2-naphthoate biosynthesis; 1,4-dihydroxy-2-naphthoate from chorismate: step 2/7. It participates in quinol/quinone metabolism; menaquinone biosynthesis. In terms of biological role, catalyzes the thiamine diphosphate-dependent decarboxylation of 2-oxoglutarate and the subsequent addition of the resulting succinic semialdehyde-thiamine pyrophosphate anion to isochorismate to yield 2-succinyl-5-enolpyruvyl-6-hydroxy-3-cyclohexene-1-carboxylate (SEPHCHC). This Vibrio campbellii (strain ATCC BAA-1116) protein is 2-succinyl-5-enolpyruvyl-6-hydroxy-3-cyclohexene-1-carboxylate synthase.